A 91-amino-acid polypeptide reads, in one-letter code: Na(+)/H(+) antiporter subunit F (91 aa).

The next 3 helical transmembrane spans lie at Ile5–Gly27, Ile34–Met53, and Val63–Ile82.

This sequence belongs to the CPA3 antiporters (TC 2.A.63) subunit F family. As to quaternary structure, forms a heterooligomeric complex that consists of seven subunits: MrpA, MrpB, MrpC, MrpD, MrpE, MrpF and MrpG.

It is found in the cell membrane. Mnh complex is a Na(+)Li(+)/H(+) antiporter involved in Na(+) and/or Li(+) excretion and Na(+) resistance. Na(+)/H(+) antiport consumes a transmembrane electrical potential, and is thus inferred to be electrogenic. Does not transport K(+), Ca(2+) or Mg(2+). In Alkalihalophilus pseudofirmus (strain ATCC BAA-2126 / JCM 17055 / OF4) (Bacillus pseudofirmus), this protein is Na(+)/H(+) antiporter subunit F (mrpF).